The sequence spans 354 residues: Small ribosomal subunit biogenesis GTPase RsgA 1 (354 aa).

Residues 1–24 (MAKKKKLTKGQVRRVRSNQQKRLK) are compositionally biased toward basic residues. A disordered region spans residues 1-28 (MAKKKKLTKGQVRRVRSNQQKRLKKQEE). A CP-type G domain is found at 113–274 (YDGLKPVAAN…LIDSPGVREF (162 aa)). GTP is bound by residues 160-163 (NKVD) and 214-222 (GQSGVGKSS). Cys-298, Cys-303, His-305, and Cys-311 together coordinate Zn(2+).

Belongs to the TRAFAC class YlqF/YawG GTPase family. RsgA subfamily. As to quaternary structure, monomer. Associates with 30S ribosomal subunit, binds 16S rRNA. Requires Zn(2+) as cofactor.

The protein localises to the cytoplasm. Functionally, one of several proteins that assist in the late maturation steps of the functional core of the 30S ribosomal subunit. Helps release RbfA from mature subunits. May play a role in the assembly of ribosomal proteins into the subunit. Circularly permuted GTPase that catalyzes slow GTP hydrolysis, GTPase activity is stimulated by the 30S ribosomal subunit. In Vibrio parahaemolyticus serotype O3:K6 (strain RIMD 2210633), this protein is Small ribosomal subunit biogenesis GTPase RsgA 1.